The chain runs to 907 residues: Eukaryotic translation initiation factor 4 gamma 2 (907 aa).

M1 is modified (N-acetylmethionine). The disordered stretch occupies residues 1-71; it reads MESAIAEGGA…SAANNSANEK (71 aa). S11 bears the Phosphoserine mark. The region spanning 78 to 308 is the MIF4G domain; sequence FRKVRGILNK…QDTVELREHH (231 aa). Residue T89 is modified to Phosphothreonine. At R360 the chain carries Omega-N-methylarginine. At S395 the chain carries Phosphoserine. K431 carries the N6-methyllysine modification. Position 443 is a phosphoserine (S443). The disordered stretch occupies residues 498–541; the sequence is PPSAQPPRTQTPPLGQTPQLGLKTNPPLIQEKPAKTSKKPPPSK. Polar residues predominate over residues 503–516; that stretch reads PPRTQTPPLGQTPQ. Omega-N-methylarginine is present on R505. Phosphothreonine is present on residues T508 and T514. The 124-residue stretch at 543-666 folds into the MI domain; that stretch reads ELLKLTETVV…SISELAQPLE (124 aa). K575 is covalently cross-linked (Glycyl lysine isopeptide (Lys-Gly) (interchain with G-Cter in SUMO2)). A W2 domain is found at 720–904; the sequence is EGKGLSFLFP…ETAEEEESEE (185 aa). S902 bears the Phosphoserine mark.

It belongs to the eukaryotic initiation factor 4G family. As to quaternary structure, interacts with the serine/threonine protein kinases MKNK1 and MKNK2. Binds EIF4A and EIF3. Interacts with MIF4GD. Interacts with DAZAP2. In terms of processing, phosphorylation; hyperphosphorylated during mitosis.

Appears to play a role in the switch from cap-dependent to IRES-mediated translation during mitosis, apoptosis and viral infection. Cleaved by some caspases and viral proteases. In Bos taurus (Bovine), this protein is Eukaryotic translation initiation factor 4 gamma 2 (EIF4G2).